Reading from the N-terminus, the 84-residue chain is MLMIRLSRRGARKQPHYRIVVIEKDRARDGRSVEVVGTYNPRTNPGSIELKRERVEYWVSKGAQMSDRVKKLWDKTPAAPASVA.

The protein belongs to the bacterial ribosomal protein bS16 family.

The chain is Small ribosomal subunit protein bS16 from Koribacter versatilis (strain Ellin345).